A 258-amino-acid polypeptide reads, in one-letter code: tRNA pseudouridine synthase A (258 aa).

Residue Asp52 is the Nucleophile of the active site. Tyr110 provides a ligand contact to substrate.

The protein belongs to the tRNA pseudouridine synthase TruA family. Homodimer.

The catalysed reaction is uridine(38/39/40) in tRNA = pseudouridine(38/39/40) in tRNA. Functionally, formation of pseudouridine at positions 38, 39 and 40 in the anticodon stem and loop of transfer RNAs. The chain is tRNA pseudouridine synthase A from Francisella tularensis subsp. novicida (strain U112).